Consider the following 617-residue polypeptide: DNA mismatch repair protein MutL (617 aa).

It belongs to the DNA mismatch repair MutL/HexB family.

In terms of biological role, this protein is involved in the repair of mismatches in DNA. It is required for dam-dependent methyl-directed DNA mismatch repair. May act as a 'molecular matchmaker', a protein that promotes the formation of a stable complex between two or more DNA-binding proteins in an ATP-dependent manner without itself being part of a final effector complex. The protein is DNA mismatch repair protein MutL of Bartonella tribocorum (strain CIP 105476 / IBS 506).